A 462-amino-acid polypeptide reads, in one-letter code: A-type ATP synthase subunit B (462 aa).

The protein belongs to the ATPase alpha/beta chains family. As to quaternary structure, has multiple subunits with at least A(3), B(3), C, D, E, F, H, I and proteolipid K(x).

The protein localises to the cell membrane. Functionally, component of the A-type ATP synthase that produces ATP from ADP in the presence of a proton gradient across the membrane. The B chain is a regulatory subunit. The chain is A-type ATP synthase subunit B from Methanococcus maripaludis (strain C5 / ATCC BAA-1333).